A 257-amino-acid chain; its full sequence is Thiazole synthase (257 aa).

The Schiff-base intermediate with DXP role is filled by K99. Residues G160, 186–187, and 208–209 each bind 1-deoxy-D-xylulose 5-phosphate; these read AG and NT.

The protein belongs to the ThiG family. As to quaternary structure, homotetramer. Forms heterodimers with either ThiH or ThiS.

The protein resides in the cytoplasm. It carries out the reaction [ThiS sulfur-carrier protein]-C-terminal-Gly-aminoethanethioate + 2-iminoacetate + 1-deoxy-D-xylulose 5-phosphate = [ThiS sulfur-carrier protein]-C-terminal Gly-Gly + 2-[(2R,5Z)-2-carboxy-4-methylthiazol-5(2H)-ylidene]ethyl phosphate + 2 H2O + H(+). Its pathway is cofactor biosynthesis; thiamine diphosphate biosynthesis. Its function is as follows. Catalyzes the rearrangement of 1-deoxy-D-xylulose 5-phosphate (DXP) to produce the thiazole phosphate moiety of thiamine. Sulfur is provided by the thiocarboxylate moiety of the carrier protein ThiS. In vitro, sulfur can be provided by H(2)S. This chain is Thiazole synthase, found in Thermodesulfovibrio yellowstonii (strain ATCC 51303 / DSM 11347 / YP87).